We begin with the raw amino-acid sequence, 614 residues long: Glucosidase 2 subunit beta (614 aa).

Positions 1–19 are cleaved as a signal peptide; that stretch reads MGLHAILLLLLLRISASAA. Asn115 carries an N-linked (GlcNAc...) asparagine glycan. Basic and acidic residues-rich tracts occupy residues 194 to 222, 231 to 272, and 324 to 351; these read EEER…KKAS, QENH…HDPE, and TGEK…HSEE. Residues 194 to 396 form a disordered region; sequence EEERLRKEKE…SHESDDEYVD (203 aa). Residues 352 to 364 are compositionally biased toward acidic residues; it reads THEDESDVPESAE. The segment covering 372-382 has biased composition (basic and acidic residues); that stretch reads SEVEDDRHKYD. Residues 383–396 show a composition bias toward acidic residues; the sequence is DEDFSHESDDEYVD. An MRH domain is found at 497–592; it reads DQCFESKEGK…VLSTPALCDE (96 aa). Cystine bridges form between Cys499-Cys512, Cys549-Cys578, and Cys563-Cys590.

Heterodimer of a catalytic alpha subunit and a beta subunit.

The protein localises to the endoplasmic reticulum. Its pathway is glycan metabolism; N-glycan metabolism. Its function is as follows. Regulatory subunit of glucosidase II. May be required for defense response elicited by pathogen-associated molecular patterns (PAMPs). This chain is Glucosidase 2 subunit beta, found in Oryza sativa subsp. japonica (Rice).